Here is a 189-residue protein sequence, read N- to C-terminus: Transcription factor FapR (189 aa).

Belongs to the FapR family.

Functionally, transcriptional factor involved in regulation of membrane lipid biosynthesis by repressing genes involved in fatty acid and phospholipid metabolism. The sequence is that of Transcription factor FapR from Listeria monocytogenes serotype 4a (strain HCC23).